A 315-amino-acid chain; its full sequence is Eukaryotic translation initiation factor 2 subunit 1 (315 aa).

Residues 17-88 form the S1 motif domain; that stretch reads EDVVMVNVRS…EKGYIDLSKR (72 aa). S49 bears the Phosphoserine; by HRI mark. S52 carries the phosphoserine modification. K141 carries the N6-acetyllysine modification. The residue at position 158 (S158) is a Phosphoserine. Phosphothreonine occurs at positions 279 and 281. The tract at residues 293–315 is disordered; the sequence is LERENAEVDGDDDAEEMEAKAED. Positions 299–308 are enriched in acidic residues; sequence EVDGDDDAEE.

The protein belongs to the eIF-2-alpha family. As to quaternary structure, eukaryotic translation initiation factor 2 eIF2 is a heterotrimeric complex composed of an alpha (EIF2S1), a beta (EIF2S2) and a gamma (EIF2S3) chain. eIF2 is member of the 43S pre-initiation complex (43S PIC). eIF2 forms a complex with at least CELF1/CUGBP1, CALR, CALR3, EIF2S1, EIF2S2, HSP90B1 and HSPA5. Interaction with METAP2 protects EIF2S1 from inhibitory phosphorylation. Interacts with ABCF1. Associates with ribosomes. Interacts with DDX3X in an RNA-independent manner. In terms of processing, phosphorylation at Ser-49 and Ser-52 stabilizes the eIF-2/GDP/eIF2B complex and prevents GDP/GTP exchange reaction, thus impairing the recycling of eIF-2 between successive rounds of initiation and leading to global inhibition of translation, while concomitantly initiating the preferential translation of integrated stress response (ISR)-specific mRNAs. Substrate for at least 4 kinases: EIF2AK1/HRI, EIF2AK2/PKR, EIF2AK3/PERK and EIF2AK4/GCN2. Phosphorylation on Ser-52 by the EIF2AK4/GCN2 protein kinase occurs in response to amino acid starvation and UV irradiation. Phosphorylation at Ser-52 by the EIF2AK3/PERK protein kinase occurs in response to the unfolded protein response. Phosphorylation at Ser-52 by EIF2AK1/HRI in response to mitochondrial damage promotes relocalization to the mitochondrial surface.

It is found in the cytoplasm. It localises to the stress granule. The protein localises to the cytosol. Its subcellular location is the mitochondrion. With respect to regulation, activity is regulated by phosphorylation at Ser-49 and Ser-52, which stabilizes the eIF2/GDP/eIF2B complex and prevents the eIF2B-mediated exchange of GDP for GTP, thereby preventing the formation of the 43S pre-initiation complex (43S PIC). This results in the global attenuation of 5' cap-dependent protein synthesis and concomitant translation of ISR-specific mRNAs that contain a short upstream open reading frame (uORF) in their 5' UTR, such as ATF4, ATF5, DDIT3/CHOP and PPP1R15A/GADD34. Functionally, member of the eIF2 complex that functions in the early steps of protein synthesis by forming a ternary complex with GTP and initiator tRNA. This complex binds to a 40S ribosomal subunit, followed by mRNA binding to form a 43S pre-initiation complex. Junction of the 60S ribosomal subunit to form the 80S initiation complex is preceded by hydrolysis of the GTP bound to eIF2 and release of an eIF2-GDP binary complex. In order for eIF2 to recycle and catalyze another round of initiation, the GDP bound to eIF2 must exchange with GTP by way of a reaction catalyzed by eIF2B. EIF2S1/eIF2-alpha is a key component of the integrated stress response (ISR), required for adaptation to various stress: phosphorylation by metabolic-stress sensing protein kinases (EIF2AK1/HRI, EIF2AK2/PKR, EIF2AK3/PERK and EIF2AK4/GCN2) in response to stress converts EIF2S1/eIF2-alpha in a global protein synthesis inhibitor, leading to a attenuation of cap-dependent translation, while concomitantly initiating the preferential translation of ISR-specific mRNAs, such as the transcriptional activators ATF4 and QRICH1, and hence allowing ATF4- and QRICH1-mediated reprogramming. EIF2S1/eIF2-alpha also acts as an activator of mitophagy in response to mitochondrial damage: phosphorylation by EIF2AK1/HRI promotes relocalization to the mitochondrial surface, thereby triggering PRKN-independent mitophagy. The protein is Eukaryotic translation initiation factor 2 subunit 1 (EIF2S1) of Pongo abelii (Sumatran orangutan).